The sequence spans 453 residues: tRNA modification GTPase MnmE (453 aa).

(6S)-5-formyl-5,6,7,8-tetrahydrofolate is bound by residues R22, E79, and K119. The region spanning 215–376 (GMKVVIAGRP…LKLHLKSLMG (162 aa)) is the TrmE-type G domain. N225 serves as a coordination point for K(+). Residues 225–230 (NAGKSS), 244–250 (TEIAGTT), 269–272 (DTAG), and 334–337 (NKAD) each bind GTP. S229 contributes to the Mg(2+) binding site. The K(+) site is built by T244, I246, and T249. T250 lines the Mg(2+) pocket. Residue K453 coordinates (6S)-5-formyl-5,6,7,8-tetrahydrofolate.

The protein belongs to the TRAFAC class TrmE-Era-EngA-EngB-Septin-like GTPase superfamily. TrmE GTPase family. Homodimer. Heterotetramer of two MnmE and two MnmG subunits. It depends on K(+) as a cofactor.

The protein resides in the cytoplasm. In terms of biological role, exhibits a very high intrinsic GTPase hydrolysis rate. Involved in the addition of a carboxymethylaminomethyl (cmnm) group at the wobble position (U34) of certain tRNAs, forming tRNA-cmnm(5)s(2)U34. This is tRNA modification GTPase MnmE from Shewanella putrefaciens (strain CN-32 / ATCC BAA-453).